The primary structure comprises 213 residues: Cell division protein SepF (213 aa).

The segment at 27–103 (VDAPAPRRAP…GSLRGSAPTR (77 aa)) is disordered. Basic and acidic residues-rich tracts occupy residues 35-51 (APVE…RFAD) and 72-90 (DEDR…DRPA).

It belongs to the SepF family. Homodimer. Interacts with FtsZ.

The protein localises to the cytoplasm. Functionally, cell division protein that is part of the divisome complex and is recruited early to the Z-ring. Probably stimulates Z-ring formation, perhaps through the cross-linking of FtsZ protofilaments. Its function overlaps with FtsA. The sequence is that of Cell division protein SepF from Mycobacteroides abscessus (strain ATCC 19977 / DSM 44196 / CCUG 20993 / CIP 104536 / JCM 13569 / NCTC 13031 / TMC 1543 / L948) (Mycobacterium abscessus).